The sequence spans 758 residues: Spastin (758 aa).

The interval 1–99 (MVRTKNQSSS…PTTCSPRSGH (99 aa)) is disordered. Residues 1–121 (MVRTKNQSSS…KQNLYVVSFP (121 aa)) are Cytoplasmic-facing. The segment at 1-210 (MVRTKNQSSS…RPIQPLEMAA (210 aa)) is required for localization to punctate cytoplasmic foci. Low complexity-rich tracts occupy residues 8–29 (SSSS…SATG), 43–58 (RSSS…AGGS), 66–76 (SSNRRSPGSSP), and 85–95 (TDDLTPTTCSP). Positions 122–142 (IIFLFNVLRSLIYQLFCIFRY) form an intramembrane region, helical. Residues 143–758 (LYGASTKVIY…WSQDYGDITI (616 aa)) are Cytoplasmic-facing. 2 stretches are compositionally biased toward polar residues: residues 169-180 (SKEQQQSLNHPS) and 189-198 (QEQQLSNQPQ). The tract at residues 169–221 (SKEQQQSLNHPSELNRDSDGQEQQLSNQPQRFRPIQPLEMAANRPGGGYSPGP) is disordered. The segment at 208-758 (MAANRPGGGY…WSQDYGDITI (551 aa)) is sufficient for interaction with microtubules and microtubule severing. The 76-residue stretch at 233-308 (HRRAFEYISK…SMARDRLHFL (76 aa)) folds into the MIT domain. Disordered regions lie at residues 353-376 (RVRS…GRKL) and 390-454 (NKSQ…ASTP). Polar residues-rich tracts occupy residues 390–406 (NKSQ…TSVG) and 425–454 (QFSS…ASTP). Residues 443–455 (NNGPSGSGASTPV) form a required for interaction with microtubules region. Residue 523-530 (GPPGNGKT) coordinates ATP.

The protein belongs to the AAA ATPase family. Spastin subfamily. As to quaternary structure, homohexamer. The homohexamer is stabilized by ATP-binding. The homohexamer may adopt a ring conformation through which microtubules pass prior to being severed. Interacts with microtubules. Interacts with atl; may be involved in microtubule dynamics.

The protein resides in the membrane. The protein localises to the cytoplasm. It is found in the cytoskeleton. Its subcellular location is the microtubule organizing center. It localises to the centrosome. The protein resides in the chromosome. The protein localises to the lipid droplet. It carries out the reaction n ATP + n H2O + a microtubule = n ADP + n phosphate + (n+1) alpha/beta tubulin heterodimers.. Functionally, ATP-dependent microtubule severing protein. Stimulates microtubule minus-end depolymerization and poleward microtubule flux in the mitotic spindle. Regulates microtubule stability in the neuromuscular junction synapse. Involved in lipid metabolism by regulating the size and distribution of lipid droplets. Involved in axon regeneration by regulating microtubule severing. The chain is Spastin from Drosophila yakuba (Fruit fly).